Reading from the N-terminus, the 789-residue chain is 1-phosphatidylinositol 4,5-bisphosphate phosphodiesterase delta-3 (789 aa).

A PH domain is found at 63–172 (RAMLRGSRLR…WVRGLTKLRA (110 aa)). Residues 73–101 (KIRSRTWHKERLYRLQEDGLSVWFQRRIP) are substrate binding. S105 carries the phosphoserine modification. EF-hand domains follow at residues 182–217 (RLDH…VNVD), 218–253 (MNDM…LLKR), and 250–285 (LLKR…QGEE). Residues D195, N197, D199, K201, E206, D231, S233, N235, R237, and E242 each coordinate Ca(2+). A PI-PLC X-box domain is found at 337–482 (QDMNQPLAHY…LKGRVLVKGK (146 aa)). Residue H352 is part of the active site. Ca(2+) contacts are provided by N353, E382, and D384. H397 is a catalytic residue. E431 serves as a coordination point for Ca(2+). The interval 461–519 (SPNPEELPSPEQLKGRVLVKGKKLPAARSEDGRALSDREEEEEDDEEEEEEVEAAAQRR) is disordered. The substrate site is built by K480 and K482. Basic and acidic residues predominate over residues 488–497 (RSEDGRALSD). A Phosphoserine modification is found at S496. Positions 498–513 (REEEEEDDEEEEEEVE) are enriched in acidic residues. The region spanning 528-644 (LSALAVYCHA…GYVLKPACLR (117 aa)) is the PI-PLC Y-box domain. S557 provides a ligand contact to substrate. Position 573 is a phosphoserine (S573). R584 is a substrate binding site. The 126-residue stretch at 644–769 (RQPDSTFDPE…QGYRHIHLLS (126 aa)) folds into the C2 domain. Ca(2+)-binding residues include I683, D685, N709, D738, Y739, and D740.

Ca(2+) is required as a cofactor. As to expression, present in corneal epithelial cells (at protein level).

It localises to the membrane. Its subcellular location is the cytoplasm. The protein localises to the cleavage furrow. The catalysed reaction is a 1,2-diacyl-sn-glycero-3-phospho-(1D-myo-inositol-4,5-bisphosphate) + H2O = 1D-myo-inositol 1,4,5-trisphosphate + a 1,2-diacyl-sn-glycerol + H(+). Its activity is regulated as follows. Strongly activated by phosphatidic acid. Inhibited by phosphatidylethanolamine (PtdEtn), phosphatidylcholine (PtdCho), sphingomyelin and phosphatidylserine (PtdSer). Functionally, hydrolyzes the phosphatidylinositol 4,5-bisphosphate (PIP2) to generate 2 second messenger molecules diacylglycerol (DAG) and inositol 1,4,5-trisphosphate (IP3). DAG mediates the activation of protein kinase C (PKC), while IP3 releases Ca(2+) from intracellular stores. Essential for trophoblast and placental development. May participate in cytokinesis by hydrolyzing PIP2 at the cleavage furrow. Regulates neurite outgrowth through the inhibition of RhoA/Rho kinase signaling. This is 1-phosphatidylinositol 4,5-bisphosphate phosphodiesterase delta-3 from Homo sapiens (Human).